A 114-amino-acid chain; its full sequence is Probable non-functional T cell receptor beta variable 6-7 (114 aa).

The first 21 residues, 1 to 21, serve as a signal peptide directing secretion; sequence MSLGLLCCVAFSLLWAGPMNA. Positions 22-114 constitute an Ig-like domain; the sequence is GVTQTPKFHV…TSVYFCASSY (93 aa). A disulfide bridge connects residues C42 and C110. An N-linked (GlcNAc...) asparagine glycan is attached at N84.

In terms of assembly, alpha-beta TR is a heterodimer composed of an alpha and beta chain; disulfide-linked. The alpha-beta TR is associated with the transmembrane signaling CD3 coreceptor proteins to form the TR-CD3 (TcR or TCR). The assembly of alpha-beta TR heterodimers with CD3 occurs in the endoplasmic reticulum where a single alpha-beta TR heterodimer associates with one CD3D-CD3E heterodimer, one CD3G-CD3E heterodimer and one CD247 homodimer forming a stable octameric structure. CD3D-CD3E and CD3G-CD3E heterodimers preferentially associate with TR alpha and TR beta chains, respectively. The association of the CD247 homodimer is the last step of TcR assembly in the endoplasmic reticulum and is required for transport to the cell surface.

The protein localises to the cell membrane. Its function is as follows. Probable non-functional open reading frame (ORF) of V region of the variable domain of T cell receptor (TR) beta chain. Non-functional ORF generally cannot participate in the synthesis of a productive T cell receptor (TR) chain due to altered V-(D)-J or switch recombination and/or splicing site (at mRNA level) and/or conserved amino acid change (protein level). Alpha-beta T cell receptors are antigen specific receptors which are essential to the immune response and are present on the cell surface of T lymphocytes. Recognize peptide-major histocompatibility (MH) (pMH) complexes that are displayed by antigen presenting cells (APC), a prerequisite for efficient T cell adaptive immunity against pathogens. Binding of alpha-beta TR to pMH complex initiates TR-CD3 clustering on the cell surface and intracellular activation of LCK that phosphorylates the ITAM motifs of CD3G, CD3D, CD3E and CD247 enabling the recruitment of ZAP70. In turn ZAP70 phosphorylates LAT, which recruits numerous signaling molecules to form the LAT signalosome. The LAT signalosome propagates signal branching to three major signaling pathways, the calcium, the mitogen-activated protein kinase (MAPK) kinase and the nuclear factor NF-kappa-B (NF-kB) pathways, leading to the mobilization of transcription factors that are critical for gene expression and essential for T cell growth and differentiation. The T cell repertoire is generated in the thymus, by V-(D)-J rearrangement. This repertoire is then shaped by intrathymic selection events to generate a peripheral T cell pool of self-MH restricted, non-autoaggressive T cells. Post-thymic interaction of alpha-beta TR with the pMH complexes shapes TR structural and functional avidity. The chain is Probable non-functional T cell receptor beta variable 6-7 from Homo sapiens (Human).